A 129-amino-acid chain; its full sequence is UPF0148 protein APE_0207 (129 aa).

It belongs to the UPF0148 family.

The polypeptide is UPF0148 protein APE_0207 (Aeropyrum pernix (strain ATCC 700893 / DSM 11879 / JCM 9820 / NBRC 100138 / K1)).